A 37-amino-acid chain; its full sequence is Large ribosomal subunit protein bL36 (37 aa).

Belongs to the bacterial ribosomal protein bL36 family.

This chain is Large ribosomal subunit protein bL36, found in Desulforamulus reducens (strain ATCC BAA-1160 / DSM 100696 / MI-1) (Desulfotomaculum reducens).